Consider the following 1096-residue polypeptide: Cation-transporting ATPase 5 (1096 aa).

Topologically, residues 1–19 (MDSIELKQLVPENDSEPGT) are cytoplasmic. The chain crosses the membrane as a helical span at residues 20–41 (PRQLLFQHYDISNEETIGIKPF). The Lumenal segment spans residues 42-47 (KSIPAK). A helical transmembrane segment spans residues 48 to 70 (VYILRVTEILTLGLLHLILTWLP). Residues 71 to 193 (EFRLKWIEAP…LVSTKKSIVT (123 aa)) are Cytoplasmic-facing. The chain crosses the membrane as a helical span at residues 194-216 (ILLNEVLHPFYLFQAVSVLIWLC). At 217–220 (DSFV) the chain is on the lumenal side. The helical transmembrane segment at 221–238 (FYSCCIVFISSYSIFLSV) threads the bilayer. Topologically, residues 239-391 (KESKESENRI…NLRPSQLYLD (153 aa)) are cytoplasmic. Residues 392–412 (SMSFLKTMAILSFVSIVFIAI) form a helical membrane-spanning segment. Residues 413 to 425 (YLNLYNASFGHVV) are Lumenal-facing. Residues 426-447 (LRSLDVLTILVPPALPATLSVG) form a helical membrane-spanning segment. At 448–895 (IANSIARLSR…SLILSHRCFQ (448 aa)) the chain is on the cytoplasmic side. Catalysis depends on Asp480, which acts as the 4-aspartylphosphate intermediate. Residues Asp838 and Asp842 each contribute to the Mg(2+) site. Residues 896-915 (YMVLCAIVQFSGVFFLYLKN) form a helical membrane-spanning segment. Topologically, residues 916–922 (YNFNDNQ) are lumenal. A helical transmembrane segment spans residues 923–940 (FLFMDLLIIFPLSAAMSY). Over 941 to 958 (FDPAQNLTSNRPNSTLFG) the chain is Cytoplasmic. Residues 959–982 (KGRVKDLGIQSVLIWLSHGLLTLI) form a helical membrane-spanning segment. The Lumenal portion of the chain corresponds to 983–1003 (LHELNWVELPEWQLEKSNTKN). A helical transmembrane segment spans residues 1004-1026 (VLVTSIFLLSSLQYLGICIGINQ). Residues 1027 to 1040 (SSEFLSPIWKKKTY) are Cytoplasmic-facing. The chain crosses the membrane as a helical span at residues 1041–1060 (VCLCTTIGLCNIYLCFANEN). Residues 1061–1075 (HIISRCLQITRLPTL) are Lumenal-facing. The helical transmembrane segment at 1076–1096 (YRFIILFMGVISCCLTSILNM) threads the bilayer.

It belongs to the cation transport ATPase (P-type) (TC 3.A.3) family. Type V subfamily.

It is found in the endoplasmic reticulum membrane. It localises to the golgi apparatus membrane. It catalyses the reaction ATP + H2O = ADP + phosphate + H(+). Its function is as follows. Plays a role in regulating calcium and manganese homeostasis responsible for cell cycle progression. This is Cation-transporting ATPase 5 (cta5) from Schizosaccharomyces pombe (strain 972 / ATCC 24843) (Fission yeast).